A 567-amino-acid chain; its full sequence is Formate--tetrahydrofolate ligase (567 aa).

Residue 68–75 coordinates ATP; sequence TPLGEGKT.

This sequence belongs to the formate--tetrahydrofolate ligase family.

The enzyme catalyses (6S)-5,6,7,8-tetrahydrofolate + formate + ATP = (6R)-10-formyltetrahydrofolate + ADP + phosphate. It participates in one-carbon metabolism; tetrahydrofolate interconversion. The polypeptide is Formate--tetrahydrofolate ligase (Desulforamulus reducens (strain ATCC BAA-1160 / DSM 100696 / MI-1) (Desulfotomaculum reducens)).